A 685-amino-acid chain; its full sequence is Methionine--tRNA ligase (685 aa).

The 'HIGH' region motif lies at 12-22 (PYANGSIHLGH). Zn(2+) is bound by residues Cys143, Cys146, Cys156, and Cys159. The 'KMSKS' region motif lies at 339–343 (KMSKS). An ATP-binding site is contributed by Lys342. The tRNA-binding domain maps to 582–685 (DFMKIDMRVA…AGAQPGDKVG (104 aa)).

Belongs to the class-I aminoacyl-tRNA synthetase family. MetG type 1 subfamily. As to quaternary structure, homodimer. Zn(2+) is required as a cofactor.

The protein resides in the cytoplasm. It carries out the reaction tRNA(Met) + L-methionine + ATP = L-methionyl-tRNA(Met) + AMP + diphosphate. Its function is as follows. Is required not only for elongation of protein synthesis but also for the initiation of all mRNA translation through initiator tRNA(fMet) aminoacylation. The chain is Methionine--tRNA ligase from Neisseria meningitidis serogroup A / serotype 4A (strain DSM 15465 / Z2491).